The following is a 332-amino-acid chain: Ketol-acid reductoisomerase (NADP(+)) (332 aa).

A KARI N-terminal Rossmann domain is found at 1 to 182; it reads MATIYYEKDA…GCTRAGVLAT (182 aa). NADP(+) contacts are provided by residues 25 to 28, Arg48, Ser53, and 83 to 86; these read YGSQ and DELQ. The active site involves His108. Gly134 provides a ligand contact to NADP(+). The 146-residue stretch at 183-328 folds into the KARI C-terminal knotted domain; that stretch reads TFKEETETDL…KELRSMMPWL (146 aa). The Mg(2+) site is built by Asp191, Glu195, Glu227, and Glu231. Ser252 is a substrate binding site.

This sequence belongs to the ketol-acid reductoisomerase family. Requires Mg(2+) as cofactor.

The catalysed reaction is (2R)-2,3-dihydroxy-3-methylbutanoate + NADP(+) = (2S)-2-acetolactate + NADPH + H(+). It catalyses the reaction (2R,3R)-2,3-dihydroxy-3-methylpentanoate + NADP(+) = (S)-2-ethyl-2-hydroxy-3-oxobutanoate + NADPH + H(+). It participates in amino-acid biosynthesis; L-isoleucine biosynthesis; L-isoleucine from 2-oxobutanoate: step 2/4. The protein operates within amino-acid biosynthesis; L-valine biosynthesis; L-valine from pyruvate: step 2/4. Involved in the biosynthesis of branched-chain amino acids (BCAA). Catalyzes an alkyl-migration followed by a ketol-acid reduction of (S)-2-acetolactate (S2AL) to yield (R)-2,3-dihydroxy-isovalerate. In the isomerase reaction, S2AL is rearranged via a Mg-dependent methyl migration to produce 3-hydroxy-3-methyl-2-ketobutyrate (HMKB). In the reductase reaction, this 2-ketoacid undergoes a metal-dependent reduction by NADPH to yield (R)-2,3-dihydroxy-isovalerate. The protein is Ketol-acid reductoisomerase (NADP(+)) of Methanocella arvoryzae (strain DSM 22066 / NBRC 105507 / MRE50).